The sequence spans 174 residues: Large ribosomal subunit protein uL6 (174 aa).

It belongs to the universal ribosomal protein uL6 family. As to quaternary structure, part of the 50S ribosomal subunit.

Its function is as follows. This protein binds to the 23S rRNA, and is important in its secondary structure. It is located near the subunit interface in the base of the L7/L12 stalk, and near the tRNA binding site of the peptidyltransferase center. This is Large ribosomal subunit protein uL6 from Acidithiobacillus ferrooxidans (strain ATCC 23270 / DSM 14882 / CIP 104768 / NCIMB 8455) (Ferrobacillus ferrooxidans (strain ATCC 23270)).